Reading from the N-terminus, the 342-residue chain is Protein-glutamate methylesterase/protein-glutamine glutaminase 4 (342 aa).

The region spanning 2 to 119 (NIGIVNDLPL…GGSADPSQPL (118 aa)) is the Response regulatory domain. Residue Asp53 is modified to 4-aspartylphosphate. Residues 144 to 337 (PAPQGALPPL…DQLISLVQRN (194 aa)) enclose the CheB-type methylesterase domain. Catalysis depends on residues Ser159, His186, and Asp279.

This sequence belongs to the CheB family. In terms of processing, phosphorylated by CheA. Phosphorylation of the N-terminal regulatory domain activates the methylesterase activity.

The protein resides in the cytoplasm. The enzyme catalyses [protein]-L-glutamate 5-O-methyl ester + H2O = L-glutamyl-[protein] + methanol + H(+). It carries out the reaction L-glutaminyl-[protein] + H2O = L-glutamyl-[protein] + NH4(+). Functionally, involved in chemotaxis. Part of a chemotaxis signal transduction system that modulates chemotaxis in response to various stimuli. Catalyzes the demethylation of specific methylglutamate residues introduced into the chemoreceptors (methyl-accepting chemotaxis proteins or MCP) by CheR. Also mediates the irreversible deamidation of specific glutamine residues to glutamic acid. In Burkholderia thailandensis (strain ATCC 700388 / DSM 13276 / CCUG 48851 / CIP 106301 / E264), this protein is Protein-glutamate methylesterase/protein-glutamine glutaminase 4.